The sequence spans 899 residues: Translation initiation factor IF-2 (899 aa).

Disordered stretches follow at residues 65 to 84 (KTRSTLNVPSTGGKSKSVQI) and 91 to 310 (TYVK…SFNK). Residues 68-82 (STLNVPSTGGKSKSV) are compositionally biased toward polar residues. Residues 108-164 (QARREAEEQAQRAAEEQAKREAELREAAEKAKRAADEQAKREAAEKAKRDVAEKEKV) show a composition bias toward basic and acidic residues. The span at 165 to 174 (TNQQNENMTK) shows a compositional bias: polar residues. Over residues 177-236 (QAEKAKREAEAAELKRKAEEAARLKVEEEARRIAEEARRMAEENAGRWEAESAKPEESAD) the composition is skewed to basic and acidic residues. Over residues 262-276 (SRSRAGKVTKQKKGN) the composition is skewed to basic residues. Positions 277–290 (RQSESKADREEARA) are enriched in basic and acidic residues. In terms of domain architecture, tr-type G spans 398-567 (ARAPVVTIMG…LLQAEVLELK (170 aa)). Residues 407–414 (GHVDHGKT) are G1. 407–414 (GHVDHGKT) is a binding site for GTP. The tract at residues 432 to 436 (GITQH) is G2. The tract at residues 453–456 (DTPG) is G3. GTP-binding positions include 453–457 (DTPGH) and 507–510 (NKID). Residues 507-510 (NKID) form a G4 region. Residues 543–545 (SAK) are G5.

It belongs to the TRAFAC class translation factor GTPase superfamily. Classic translation factor GTPase family. IF-2 subfamily.

The protein resides in the cytoplasm. Its function is as follows. One of the essential components for the initiation of protein synthesis. Protects formylmethionyl-tRNA from spontaneous hydrolysis and promotes its binding to the 30S ribosomal subunits. Also involved in the hydrolysis of GTP during the formation of the 70S ribosomal complex. In Pectobacterium carotovorum subsp. carotovorum (strain PC1), this protein is Translation initiation factor IF-2.